The sequence spans 805 residues: Transducer protein BasT (805 aa).

2 helical membrane-spanning segments follow: residues 25–45 (FNVL…YIHL) and 296–316 (NLAG…LTVG). HAMP domains follow at residues 317–370 (RRTS…TAAS) and 437–490 (ERLE…ATLA). A Methyl-accepting transducer domain is found at 509–745 (SAAEIRSASD…EVVTMIDEVT (237 aa)). The interval 513–532 (IRSASDQVSESVQDISADAD) is disordered. Positions 516 to 526 (ASDQVSESVQD) are enriched in polar residues. A glutamate methyl ester (Glu) mark is found at E554, E736, and E763. The interval 752–779 (ATESQQVSAAAEEQAASVSEVAGRADDL) is disordered. Residues 754–773 (ESQQVSAAAEEQAASVSEVA) are compositionally biased toward low complexity.

Belongs to the methyl-accepting chemotaxis (MCP) protein family. Interacts with CheA, CheY, CheW1 and CheW2. Post-translationally, methylated by CheR.

Its subcellular location is the cell membrane. Its function is as follows. Mediates chemotaxis towards five attractant amino acids (leucine, isoleucine, valine, methionine and cysteine). Probably transduces the signal from the substrate-binding protein BasB to the histidine kinase CheA. This is Transducer protein BasT (basT) from Halobacterium salinarum (strain ATCC 29341 / DSM 671 / R1).